The chain runs to 144 residues: Cytochrome c oxidase subunit 4 isoform 1, mitochondrial (144 aa).

Over 1–73 the chain is Mitochondrial matrix; it reads SVVKSEDFSL…SFAEMNRGSN (73 aa). An N6-acetyllysine; alternate modification is found at Lys4. An N6-succinyllysine; alternate modification is found at Lys4. N6-acetyllysine is present on Lys28. Residues Ser31 and Ser33 each carry the phosphoserine modification. Lys35 is subject to N6-acetyllysine; alternate. At Lys35 the chain carries N6-succinyllysine; alternate. At Lys42 the chain carries N6-acetyllysine. Residues 74–99 traverse the membrane as a helical segment; the sequence is EWKTVVGGAMFFIGFTALIIMWQKHY. Residues 100 to 144 are Mitochondrial intermembrane-facing; sequence VYGPLPQTFDKEWVGKQTKRMLDMKVNPIQGLASKWDYEKNEWKK.

Belongs to the cytochrome c oxidase IV family. In terms of assembly, component of the cytochrome c oxidase (complex IV, CIV), a multisubunit enzyme composed of 14 subunits. The complex is composed of a catalytic core of 3 subunits MT-CO1, MT-CO2 and MT-CO3, encoded in the mitochondrial DNA, and 11 supernumerary subunits COX4I, COX5A, COX5B, COX6A, COX6B, COX6C, COX7A, COX7B, COX7C, COX8 and NDUFA4, which are encoded in the nuclear genome. The complex exists as a monomer or a dimer and forms supercomplexes (SCs) in the inner mitochondrial membrane with NADH-ubiquinone oxidoreductase (complex I, CI) and ubiquinol-cytochrome c oxidoreductase (cytochrome b-c1 complex, complex III, CIII), resulting in different assemblies (supercomplex SCI(1)III(2)IV(1) and megacomplex MCI(2)III(2)IV(2)). Interacts with PHB2; the interaction decreases in absence of SPHK2. Interacts with AFG1L. Interacts with ABCB7; this interaction allows the regulation of cellular iron homeostasis and cellular reactive oxygen species (ROS) levels in cardiomyocytes. Interacts with FLVCR2; this interaction occurs in the absence of heme and is disrupted upon heme binding. Interacts with IRGC.

It is found in the mitochondrion inner membrane. The protein operates within energy metabolism; oxidative phosphorylation. Functionally, component of the cytochrome c oxidase, the last enzyme in the mitochondrial electron transport chain which drives oxidative phosphorylation. The respiratory chain contains 3 multisubunit complexes succinate dehydrogenase (complex II, CII), ubiquinol-cytochrome c oxidoreductase (cytochrome b-c1 complex, complex III, CIII) and cytochrome c oxidase (complex IV, CIV), that cooperate to transfer electrons derived from NADH and succinate to molecular oxygen, creating an electrochemical gradient over the inner membrane that drives transmembrane transport and the ATP synthase. Cytochrome c oxidase is the component of the respiratory chain that catalyzes the reduction of oxygen to water. Electrons originating from reduced cytochrome c in the intermembrane space (IMS) are transferred via the dinuclear copper A center (CU(A)) of subunit 2 and heme A of subunit 1 to the active site in subunit 1, a binuclear center (BNC) formed by heme A3 and copper B (CU(B)). The BNC reduces molecular oxygen to 2 water molecules using 4 electrons from cytochrome c in the IMS and 4 protons from the mitochondrial matrix. This Hylobates agilis (Agile gibbon) protein is Cytochrome c oxidase subunit 4 isoform 1, mitochondrial (COX4I1).